Reading from the N-terminus, the 429-residue chain is Enolase (429 aa).

Position 165 (Q165) interacts with (2R)-2-phosphoglycerate. The Proton donor role is filled by E207. Mg(2+)-binding residues include D244, E287, and D314. (2R)-2-phosphoglycerate-binding residues include K339, R368, S369, and K390. The active-site Proton acceptor is K339.

It belongs to the enolase family. Mg(2+) serves as cofactor.

It localises to the cytoplasm. The protein localises to the secreted. The protein resides in the cell surface. It catalyses the reaction (2R)-2-phosphoglycerate = phosphoenolpyruvate + H2O. It participates in carbohydrate degradation; glycolysis; pyruvate from D-glyceraldehyde 3-phosphate: step 4/5. In terms of biological role, catalyzes the reversible conversion of 2-phosphoglycerate (2-PG) into phosphoenolpyruvate (PEP). It is essential for the degradation of carbohydrates via glycolysis. The polypeptide is Enolase (Roseiflexus sp. (strain RS-1)).